Here is a 362-residue protein sequence, read N- to C-terminus: Flagellar P-ring protein (362 aa).

A signal peptide spans 1-15; it reads MLAAALMSAAFGAHA.

This sequence belongs to the FlgI family. In terms of assembly, the basal body constitutes a major portion of the flagellar organelle and consists of four rings (L,P,S, and M) mounted on a central rod.

It localises to the periplasm. It is found in the bacterial flagellum basal body. In terms of biological role, assembles around the rod to form the L-ring and probably protects the motor/basal body from shearing forces during rotation. This Pseudomonas fluorescens (strain Pf0-1) protein is Flagellar P-ring protein.